We begin with the raw amino-acid sequence, 151 residues long: UPF0178 protein YaiI (151 aa).

The protein belongs to the UPF0178 family.

The sequence is that of UPF0178 protein YaiI from Salmonella paratyphi C (strain RKS4594).